A 161-amino-acid chain; its full sequence is uncharacterized protein (161 aa).

Residues 1–29 (MTLYDTVKELQEKLRNGEIEINTFLERLG) adopt a coiled-coil conformation.

This is an uncharacterized protein from Acidianus convivator (ATV).